A 695-amino-acid chain; its full sequence is UvrABC system protein B (695 aa).

The 384-residue stretch at 31–414 folds into the Helicase ATP-binding domain; sequence EGIESGLSFQ…EIQRSGQIAE (384 aa). Residue 44–51 coordinates ATP; that stretch reads GVTGSGKT. Residues 97–120 carry the Beta-hairpin motif; the sequence is YYDYYQPEAYVPSRDLFIEKDSSI. The 167-residue stretch at 435 to 601 folds into the Helicase C-terminal domain; that stretch reads QVDDLMSEVS…GVNKRIKDLI (167 aa). One can recognise a UVR domain in the interval 632–667; it reads AKEIQRLEKSMLEAARNMEFEQAAQYRDEIKNLRSK.

It belongs to the UvrB family. In terms of assembly, forms a heterotetramer with UvrA during the search for lesions. Interacts with UvrC in an incision complex.

It is found in the cytoplasm. Its function is as follows. The UvrABC repair system catalyzes the recognition and processing of DNA lesions. A damage recognition complex composed of 2 UvrA and 2 UvrB subunits scans DNA for abnormalities. Upon binding of the UvrA(2)B(2) complex to a putative damaged site, the DNA wraps around one UvrB monomer. DNA wrap is dependent on ATP binding by UvrB and probably causes local melting of the DNA helix, facilitating insertion of UvrB beta-hairpin between the DNA strands. Then UvrB probes one DNA strand for the presence of a lesion. If a lesion is found the UvrA subunits dissociate and the UvrB-DNA preincision complex is formed. This complex is subsequently bound by UvrC and the second UvrB is released. If no lesion is found, the DNA wraps around the other UvrB subunit that will check the other stand for damage. The sequence is that of UvrABC system protein B from Nitrosomonas europaea (strain ATCC 19718 / CIP 103999 / KCTC 2705 / NBRC 14298).